The primary structure comprises 182 residues: Ribosome-recycling factor (182 aa).

This sequence belongs to the RRF family.

Its subcellular location is the cytoplasm. Functionally, responsible for the release of ribosomes from messenger RNA at the termination of protein biosynthesis. May increase the efficiency of translation by recycling ribosomes from one round of translation to another. The sequence is that of Ribosome-recycling factor from Prochlorococcus marinus (strain MIT 9215).